Reading from the N-terminus, the 259-residue chain is 14-3-3-like protein (259 aa).

Residues 237-259 (DTTDDAEDEIREGSKQESGDGQQ) form a disordered region. Positions 247-259 (REGSKQESGDGQQ) are enriched in basic and acidic residues.

This sequence belongs to the 14-3-3 family. Leaves specific.

The chain is 14-3-3-like protein from Solanum tuberosum (Potato).